Consider the following 805-residue polypeptide: ATP-dependent RNA helicase mak-5 (805 aa).

Residues 1–10 are compositionally biased toward basic residues; that stretch reads MAVDKKRKNT. Disordered stretches follow at residues 1–33 and 79–189; these read MAVD…KRPV and VPKS…ELET. Residues 85–100 are compositionally biased toward acidic residues; sequence EVEDDGEEFGGFDDEE. 3 stretches are compositionally biased toward basic and acidic residues: residues 110–119, 126–143, and 164–189; these read QEVKTSETKA, AKEK…EQQK, and KNAE…ELET. A Q motif motif is present at residues 209–237; it reads SEWVPLDLSPRMISSIAKLRFSKPTVIQS. The 224-residue stretch at 240–463 folds into the Helicase ATP-binding domain; it reads IPEIMAGHDV…AGKSKFKATS (224 aa). 253 to 260 lines the ATP pocket; the sequence is ASTGSGKT. Residues 372 to 375 carry the DEAD box motif; that stretch reads DEAD. A compositionally biased stretch (basic and acidic residues) spans 390–406; it reads FKALDRPPVEENNEDQK. The interval 390–435 is disordered; it reads FKALDRPPVEENNEDQKMGGTDEEGQEEEEEDSEEEEEEEEEHVNK. Positions 410 to 431 are enriched in acidic residues; that stretch reads TDEEGQEEEEEDSEEEEEEEEE. The Helicase C-terminal domain occupies 510 to 666; the sequence is YLYATLMLQP…NSGNNTKKLV (157 aa). A disordered region spans residues 729–751; that stretch reads AGKWGGKGSSKKQKQKEAQQMSK.

This sequence belongs to the DEAD box helicase family. DDX24/MAK5 subfamily.

The protein resides in the nucleus. It is found in the nucleolus. The catalysed reaction is ATP + H2O = ADP + phosphate + H(+). In terms of biological role, ATP-binding RNA helicase involved in the biogenesis of 60S ribosomal subunits and is required for the normal formation of 25S and 5.8S rRNAs. The chain is ATP-dependent RNA helicase mak-5 (mak-5) from Neurospora crassa (strain ATCC 24698 / 74-OR23-1A / CBS 708.71 / DSM 1257 / FGSC 987).